The primary structure comprises 657 residues: MGLLETVKDPRDLAKLSGTELEQLAGEIREFLITNVAATGGHLGPNLGVVELTLAVHRNFDSPRDSIVFDTGHQSYVHKLLTGRQDFTTLRQQGGLSGYPDRAESEHDIVESSHASSSLSWADGISRARQLTGEGDRFVVAVVGDGALTGGMAWEAINNIAADKRRRVVIVVNDNGRSYAPTVGGFADYLASLRPTIDSLRTTPAYERMLDWWKKKLQDGGPAGQFTYKSLHAMKKGIKDWWAPQGMFEDLGMKYIGPVDGHNLQAMEHALNTAKAYGGPVIVHAMTEKGHGYAPALANEADQFHAVGIIDPETGEPTEMSGARSWTSVFAEEIADIADERSDIVGITGAMLIPVGLHKFAERHPERVIDVGIAEQHALTSAAGMAFGGLHPVVAVYATFLNRAFDQLLMDVALHKAGVTIVLDRAGVTGPDGPSHHGMWDMAMVQIVPGLHLAAPRDATRLREELREAVAINDAPTVVRFSKGSVGSEIEAIDRLHDGVDILARRPDGSTENDVLIVSVGAMSELALDVATRLGAQGISSTVVDPRWVLPVRKSIIALAARHRLVICIEDGVRAGGVGSRIRQEMRAAGVDTALNEVGLPVEFLVHGSRSQVLERVGLTAQKITHDVVAQVLGTKVPFARPLPGQEHPTTGSLPTL.

Thiamine diphosphate-binding positions include H73 and 113–115 (SHA). D145 contributes to the Mg(2+) binding site. Residues 146–147 (GA), N175, Y293, and E375 each bind thiamine diphosphate. N175 lines the Mg(2+) pocket.

This sequence belongs to the transketolase family. DXPS subfamily. In terms of assembly, homodimer. It depends on Mg(2+) as a cofactor. Thiamine diphosphate is required as a cofactor.

It carries out the reaction D-glyceraldehyde 3-phosphate + pyruvate + H(+) = 1-deoxy-D-xylulose 5-phosphate + CO2. It functions in the pathway metabolic intermediate biosynthesis; 1-deoxy-D-xylulose 5-phosphate biosynthesis; 1-deoxy-D-xylulose 5-phosphate from D-glyceraldehyde 3-phosphate and pyruvate: step 1/1. Its function is as follows. Catalyzes the acyloin condensation reaction between C atoms 2 and 3 of pyruvate and glyceraldehyde 3-phosphate to yield 1-deoxy-D-xylulose-5-phosphate (DXP). The protein is 1-deoxy-D-xylulose-5-phosphate synthase of Paenarthrobacter aurescens (strain TC1).